A 460-amino-acid chain; its full sequence is Cysteine--tRNA ligase (460 aa).

Cys28 contacts Zn(2+). A 'HIGH' region motif is present at residues 30–40; the sequence is MTVYDYCHLGH. Zn(2+)-binding residues include Cys209, His234, and Glu238. The 'KMSKS' region signature appears at 266-270; that stretch reads KMSKS. Position 269 (Lys269) interacts with ATP.

The protein belongs to the class-I aminoacyl-tRNA synthetase family. Monomer. Zn(2+) serves as cofactor.

It is found in the cytoplasm. It catalyses the reaction tRNA(Cys) + L-cysteine + ATP = L-cysteinyl-tRNA(Cys) + AMP + diphosphate. The sequence is that of Cysteine--tRNA ligase from Thioalkalivibrio sulfidiphilus (strain HL-EbGR7).